Reading from the N-terminus, the 81-residue chain is Serine rich endogenous peptide 21 (81 aa).

The signal sequence occupies residues 1–40; that stretch reads MLELHFEFIDLNQPKMYKFVVCLLTLSFLLLSGLSNTALA. The SCOOP motif signature appears at 65 to 79; sequence KVRVLPSASRRGPGQ. Positions 71 to 73 match the SxS motif essential for MIK2 binding motif; the sequence is SAS.

Belongs to the serine rich endogenous peptide (SCOOP) phytocytokine family. In terms of assembly, interacts with MIK2 (via extracellular leucine-rich repeat domain); this interaction triggers the formation of complex between MIK2 and the BAK1/SERK3 and SERK4 coreceptors, and subsequent BAK1 activation by phosphorylation.

It localises to the cell membrane. The protein resides in the secreted. It is found in the extracellular space. Its subcellular location is the apoplast. Its function is as follows. Brassicaceae-specific phytocytokine (plant endogenous peptide released into the apoplast) perceived by MIK2 in a BAK1/SERK3 and SERK4 coreceptors-dependent manner, that modulates various physiological and antimicrobial processes including growth prevention and reactive oxygen species (ROS) response regulation. In Arabidopsis thaliana (Mouse-ear cress), this protein is Serine rich endogenous peptide 21.